The following is a 310-amino-acid chain: N-acetyl-gamma-glutamyl-phosphate reductase (310 aa).

Cys116 is an active-site residue.

It belongs to the NAGSA dehydrogenase family. Type 2 subfamily.

The protein localises to the cytoplasm. The catalysed reaction is N-acetyl-L-glutamate 5-semialdehyde + phosphate + NADP(+) = N-acetyl-L-glutamyl 5-phosphate + NADPH + H(+). Its pathway is amino-acid biosynthesis; L-arginine biosynthesis; N(2)-acetyl-L-ornithine from L-glutamate: step 3/4. Catalyzes the NADPH-dependent reduction of N-acetyl-5-glutamyl phosphate to yield N-acetyl-L-glutamate 5-semialdehyde. This chain is N-acetyl-gamma-glutamyl-phosphate reductase, found in Chelativorans sp. (strain BNC1).